Here is a 545-residue protein sequence, read N- to C-terminus: ATP synthase subunit alpha (545 aa).

172–179 (GDRKTGKT) lines the ATP pocket.

This sequence belongs to the ATPase alpha/beta chains family. In terms of assembly, F-type ATPases have 2 components, CF(1) - the catalytic core - and CF(0) - the membrane proton channel. CF(1) has five subunits: alpha(3), beta(3), gamma(1), delta(1), epsilon(1). CF(0) has three main subunits: a(1), b(2) and c(9-12). The alpha and beta chains form an alternating ring which encloses part of the gamma chain. CF(1) is attached to CF(0) by a central stalk formed by the gamma and epsilon chains, while a peripheral stalk is formed by the delta and b chains.

Its subcellular location is the cell membrane. The catalysed reaction is ATP + H2O + 4 H(+)(in) = ADP + phosphate + 5 H(+)(out). Produces ATP from ADP in the presence of a proton gradient across the membrane. The alpha chain is a regulatory subunit. The protein is ATP synthase subunit alpha of Nocardia farcinica (strain IFM 10152).